We begin with the raw amino-acid sequence, 256 residues long: tRNA pseudouridine synthase A (256 aa).

Residue Asp-49 is the Nucleophile of the active site. Tyr-104 provides a ligand contact to substrate.

This sequence belongs to the tRNA pseudouridine synthase TruA family.

It carries out the reaction uridine(38/39/40) in tRNA = pseudouridine(38/39/40) in tRNA. In terms of biological role, formation of pseudouridine at positions 38, 39 and 40 in the anticodon stem and loop of transfer RNAs. This is tRNA pseudouridine synthase A from Methanopyrus kandleri (strain AV19 / DSM 6324 / JCM 9639 / NBRC 100938).